Reading from the N-terminus, the 498-residue chain is Probable malate:quinone oxidoreductase (498 aa).

Belongs to the MQO family. FAD is required as a cofactor.

It carries out the reaction (S)-malate + a quinone = a quinol + oxaloacetate. It participates in carbohydrate metabolism; tricarboxylic acid cycle; oxaloacetate from (S)-malate (quinone route): step 1/1. The chain is Probable malate:quinone oxidoreductase from Prochlorococcus marinus (strain AS9601).